We begin with the raw amino-acid sequence, 270 residues long: Bacterial microcompartment shell protein PduB (270 aa).

Positions 6–18 (LVEQIMAQVIARV) are probable helix that binds cargo to the BMC shell. 2 consecutive BMC circularly permuted domains span residues 47-152 (EFVG…DRTF) and 154-258 (DVYG…LATL).

Belongs to the EutL/PduB family. Homotrimerizes to form a pseudohexamer with a central pore. The trimers pack into an array. Post-translationally, in purified BMCs seen as a 28.0 kDa and 25.0 kDa form, both of which have been N-terminally sequenced and whose N-fMet is removed; the smaller form is called PduB'.

It is found in the bacterial microcompartment. Its pathway is polyol metabolism; 1,2-propanediol degradation. The two proteins produced are among the major shell proteins of the bacterial microcompartment (BMC) dedicated to 1,2-propanediol (1,2-PD) degradation. Required for structural integrity of BMCs and to mitigate propionaldehyde toxicity. The N-terminal 13 residues are important for correct assembly of the BMC shell. The isolated BMC shell component protein ratio for J:A:B':B:K:T:U is approximately 15:10:7:6:1:1:2. The N-terminus of the long form (PduB) is required for correct formation of BMCs, deletions in the first 37 residues have substantially reduced levels of the major lumen enzymes. May play a major role in binding the enzyme contents to the shell. In terms of biological role, the 1,2-PD-specific bacterial microcompartment (BMC) concentrates low levels of 1,2-PD catabolic enzymes, concentrates volatile reaction intermediates thus enhancing pathway flux and keeps the level of toxic, mutagenic propionaldehyde low. This is Bacterial microcompartment shell protein PduB from Salmonella typhimurium (strain LT2 / SGSC1412 / ATCC 700720).